A 167-amino-acid polypeptide reads, in one-letter code: uncharacterized protein (167 aa).

This is an uncharacterized protein from Pasteurella multocida (strain Pm70).